The sequence spans 138 residues: Cysteine desulfuration protein SufE (138 aa).

The active-site Cysteine persulfide intermediate is the Cys51.

This sequence belongs to the SufE family. As to quaternary structure, homodimer. Interacts with SufS.

It localises to the cytoplasm. It participates in cofactor biosynthesis; iron-sulfur cluster biosynthesis. Its function is as follows. Participates in cysteine desulfuration mediated by SufS. Cysteine desulfuration mobilizes sulfur from L-cysteine to yield L-alanine and constitutes an essential step in sulfur metabolism for biosynthesis of a variety of sulfur-containing biomolecules. Functions as a sulfur acceptor for SufS, by mediating the direct transfer of the sulfur atom from the S-sulfanylcysteine of SufS, an intermediate product of cysteine desulfuration process. This chain is Cysteine desulfuration protein SufE, found in Sodalis glossinidius (strain morsitans).